The primary structure comprises 398 residues: DNA-directed RNA polymerase III subunit RPC4 (398 aa).

A disordered region spans residues 1–149 (MSEGNAAGEP…IKKEKRETDE (149 aa)). Serine 2 bears the N-acetylserine mark. Residue serine 42 is modified to Phosphoserine. 3 stretches are compositionally biased toward basic and acidic residues: residues 66 to 100 (KIKE…RGRP), 116 to 128 (MMKK…KTVD), and 140 to 149 (IKKEKRETDE). Residues lysine 68 and lysine 78 each participate in a glycyl lysine isopeptide (Lys-Gly) (interchain with G-Cter in SUMO2) cross-link. Arginine 95, arginine 97, and arginine 99 each carry omega-N-methylarginine. Glycyl lysine isopeptide (Lys-Gly) (interchain with G-Cter in SUMO2) cross-links involve residues lysine 141, lysine 152, lysine 160, lysine 190, lysine 199, lysine 206, lysine 220, lysine 285, lysine 302, and lysine 396. A disordered region spans residues 191-244 (EESEEPEAKPFSAGPKEEDMEVDVPAVKVKEEPRDEEEEAKVKAPPRAARKTPG).

It belongs to the eukaryotic RPC4/POLR3D RNA polymerase subunit family. As to quaternary structure, component of the RNA polymerase III complex consisting of 17 subunits: a ten-subunit horseshoe-shaped catalytic core composed of POLR3A/RPC1, POLR3B/RPC2, POLR1C/RPAC1, POLR1D/RPAC2, POLR3K/RPC10, POLR2E/RPABC1, POLR2F/RPABC2, POLR2H/RPABC3, POLR2K/RPABC4 and POLR2L/RPABC5; a mobile stalk composed of two subunits POLR3H/RPC8 and CRCP/RPC9, protruding from the core and functioning primarily in transcription initiation; and additional subunits homologous to general transcription factors of the RNA polymerase II machinery, POLR3C/RPC3-POLR3F/RPC6-POLR3G/RPC7 heterotrimer required for transcription initiation and POLR3D/RPC4-POLR3E/RPC5 heterodimer involved in both transcription initiation and termination. Post-translationally, sumoylation on Lys-141 can serve as a signal to mark misfolded Pol III for proteasomal degradation.

The protein localises to the nucleus. DNA-dependent RNA polymerase catalyzes the transcription of DNA into RNA using the four ribonucleoside triphosphates as substrates. Specific peripheric component of RNA polymerase III (Pol III) which synthesizes small non-coding RNAs including 5S rRNA, snRNAs, tRNAs and miRNAs from at least 500 distinct genomic loci. Enables recruitment of Pol III at transcription initiation site and drives transcription initiation from both type 2 and type 3 DNA promoters. Required for efficient transcription termination and reinitiation. Pol III plays a key role in sensing and limiting infection by intracellular bacteria and DNA viruses. Acts as nuclear and cytosolic DNA sensor involved in innate immune response. Can sense non-self dsDNA that serves as template for transcription into dsRNA. The non-self RNA polymerase III transcripts, such as Epstein-Barr virus-encoded RNAs (EBERs) induce type I interferon and NF-kappa-B through the RIG-I pathway. This is DNA-directed RNA polymerase III subunit RPC4 from Mus musculus (Mouse).